A 286-amino-acid polypeptide reads, in one-letter code: Glycine--tRNA ligase alpha subunit (286 aa).

Belongs to the class-II aminoacyl-tRNA synthetase family. Tetramer of two alpha and two beta subunits.

Its subcellular location is the cytoplasm. The catalysed reaction is tRNA(Gly) + glycine + ATP = glycyl-tRNA(Gly) + AMP + diphosphate. This Campylobacter concisus (strain 13826) protein is Glycine--tRNA ligase alpha subunit.